A 50-amino-acid polypeptide reads, in one-letter code: Large ribosomal subunit protein bL33B (50 aa).

Belongs to the bacterial ribosomal protein bL33 family.

The polypeptide is Large ribosomal subunit protein bL33B (Streptococcus pyogenes serotype M1).